The chain runs to 351 residues: Dihydroorotate dehydrogenase (quinone) (351 aa).

FMN is bound by residues 61 to 65 (AGLDK) and T85. K65 is a substrate binding site. 110 to 114 (NRMGF) provides a ligand contact to substrate. FMN-binding residues include N139 and N172. N172 is a binding site for substrate. The active-site Nucleophile is S175. N177 is a binding site for substrate. FMN is bound by residues K217 and T245. 246 to 247 (NT) contributes to the substrate binding site. FMN contacts are provided by residues G268, G297, and 318-319 (YS).

Belongs to the dihydroorotate dehydrogenase family. Type 2 subfamily. In terms of assembly, monomer. It depends on FMN as a cofactor.

The protein resides in the cell membrane. The catalysed reaction is (S)-dihydroorotate + a quinone = orotate + a quinol. It participates in pyrimidine metabolism; UMP biosynthesis via de novo pathway; orotate from (S)-dihydroorotate (quinone route): step 1/1. Functionally, catalyzes the conversion of dihydroorotate to orotate with quinone as electron acceptor. This Stenotrophomonas maltophilia (strain K279a) protein is Dihydroorotate dehydrogenase (quinone).